The following is a 90-amino-acid chain: Probable Fe(2+)-trafficking protein (90 aa).

It belongs to the Fe(2+)-trafficking protein family. In terms of assembly, monomer.

In terms of biological role, could be a mediator in iron transactions between iron acquisition and iron-requiring processes, such as synthesis and/or repair of Fe-S clusters in biosynthetic enzymes. This chain is Probable Fe(2+)-trafficking protein, found in Edwardsiella ictaluri (strain 93-146).